A 98-amino-acid chain; its full sequence is HssA/B-like protein 50 (98 aa).

2 disordered regions span residues 1–26 (MTLF…SFGS) and 68–98 (TRGS…CCGI). Residues 84 to 98 (GHGGMGGGNGSCCGI) show a composition bias toward gly residues.

The protein belongs to the hssA/B family.

In Dictyostelium discoideum (Social amoeba), this protein is HssA/B-like protein 50 (hssl50).